Consider the following 218-residue polypeptide: MPVKIVLLGPPGAGKGTQAKSISNRYSIPHISTGDIFRKNISENTPLGIEAKSYMDNGQLVPDEVTINMVKDRLQQDDCKNGYLLDGFPRTVHQAEALDNFLTEREESIDTALLIEVPKEFILERMTGRRVCPSCGASYHIKFNPPTNDGKCDLCGSDVIQRKDDTEETVKERLDVYENQTQPLIDFYKNKKQLSVVDGTQAINEVFESICKILGSDK.

12 to 17 contributes to the ATP binding site; it reads GAGKGT. An NMP region spans residues 32–61; it reads STGDIFRKNISENTPLGIEAKSYMDNGQLV. AMP-binding positions include Thr-33, Arg-38, 59-61, 87-90, and Gln-94; these read QLV and GFPR. Residues 128–165 are LID; that stretch reads GRRVCPSCGASYHIKFNPPTNDGKCDLCGSDVIQRKDD. Residue Arg-129 coordinates ATP. Zn(2+)-binding residues include Cys-132 and Cys-135. 138 to 139 is an ATP binding site; that stretch reads SY. Cys-152 and Cys-155 together coordinate Zn(2+). Residues Arg-162 and Arg-173 each coordinate AMP. Gln-201 contacts ATP.

The protein belongs to the adenylate kinase family. In terms of assembly, monomer.

Its subcellular location is the cytoplasm. It carries out the reaction AMP + ATP = 2 ADP. It functions in the pathway purine metabolism; AMP biosynthesis via salvage pathway; AMP from ADP: step 1/1. Catalyzes the reversible transfer of the terminal phosphate group between ATP and AMP. Plays an important role in cellular energy homeostasis and in adenine nucleotide metabolism. This chain is Adenylate kinase, found in Clostridium perfringens (strain 13 / Type A).